The sequence spans 637 residues: Pyrethroid hydrolase (637 aa).

It catalyses the reaction (-)-trans-permethrin + H2O = (3-phenoxyphenyl)methanol + (1S,3R)-3-(2,2-dichlorovinyl)-2,2-dimethylcyclopropanecarboxylate + H(+). Inhibited by Hg(2+), Ag(+) and rho-chloromercuribenzoate. Its function is as follows. Catalyzes the hydrolysis of pyrethroids pesticides. Hydrolyzes cis-permethrin at approximately equal rate to trans-permethrin. The polypeptide is Pyrethroid hydrolase (estP) (Klebsiella sp).